We begin with the raw amino-acid sequence, 469 residues long: Protein RUFY3 (469 aa).

Threonine 5 and threonine 12 each carry phosphothreonine. Residues serine 34 and serine 49 each carry the phosphoserine modification. Position 51 is a phosphothreonine (threonine 51). An RUN domain is found at aspartate 95–glutamate 227. Coiled coils occupy residues asparagine 271 to glutamate 362 and lysine 422 to lysine 463.

Interacts with PAK1. Interacts (via C-terminus) with Ras-related Rab-5 proteins. Interacts (via C-terminus) with Ras-related Rap-2 proteins. Interacts with PIK3CA and PIK3R1. Interacts (via N-terminus) with FSCN1; this interaction induces neuron axon development. Interacts with DBN1. Interacts (via the second coiled coil) with GTP-, but not GDP-bound ARL8A and ARL8B. Interacts with dynactin/DCTN1 and the dynein intermediate chain DYNC1I1/2. Directly interacts with DYNC1LI1. Isoform 1 is partially phosphorylated. Phosphorylated by PAK1. As to expression, expressed in brain (at protein level).

The protein resides in the cytoplasm. Its subcellular location is the endomembrane system. It localises to the cell projection. The protein localises to the invadopodium. It is found in the growth cone. The protein resides in the perikaryon. Its subcellular location is the filopodium. It localises to the lamellipodium. The protein localises to the lysosome. Its function is as follows. ARL8 effector that promotes the coupling of endolysosomes to dynein-dynactin for retrograde transport along microtubules. Acts by binding both GTP-bound ARL8 and dynein-dynactin. In nonneuronal cells, promotes concentration of endolysosomes in the juxtanuclear area. In hippocampal neurons, drives retrograde transport of endolysosomes from the axon to the soma. Plays a role in the generation of neuronal polarity formation and axon growth. Implicated in the formation of a single axon by developing neurons. May inhibit the formation of additional axons by inhibition of PI3K in minor neuronal processes. Plays a role in the formation of F-actin-enriched protrusive structures at the cell periphery. Plays a role in cytoskeletal organization by regulating the subcellular localization of FSCN1 and DBN1 at axonal growth cones. The chain is Protein RUFY3 from Rattus norvegicus (Rat).